Here is a 155-residue protein sequence, read N- to C-terminus: Fibroblast growth factor 2 (155 aa).

Positions 1 to 9 (MAAGSITTL) are excised as a propeptide. Residues 1-11 (MAAGSITTLPT) are compositionally biased toward polar residues. The segment at 1–24 (MAAGSITTLPTESEDGGNTPFSPG) is disordered. Heparin is bound by residues 27 to 31 (KDPKR) and 116 to 119 (RSRK).

This sequence belongs to the heparin-binding growth factors family.

The protein localises to the secreted. The protein resides in the nucleus. Functionally, acts as a ligand for FGFR1, FGFR2, FGFR3 and FGFR4. Also acts as an integrin ligand which is required for FGF2 signaling. Plays an important role in the regulation of cell survival, cell division, cell differentiation and cell migration. Functions as a potent mitogen in vitro. Can induce angiogenesis. This is Fibroblast growth factor 2 (fgf2) from Xenopus laevis (African clawed frog).